A 269-amino-acid polypeptide reads, in one-letter code: Indole-3-glycerol phosphate synthase (269 aa).

This sequence belongs to the TrpC family.

The catalysed reaction is 1-(2-carboxyphenylamino)-1-deoxy-D-ribulose 5-phosphate + H(+) = (1S,2R)-1-C-(indol-3-yl)glycerol 3-phosphate + CO2 + H2O. It participates in amino-acid biosynthesis; L-tryptophan biosynthesis; L-tryptophan from chorismate: step 4/5. In Saccharopolyspora erythraea (strain ATCC 11635 / DSM 40517 / JCM 4748 / NBRC 13426 / NCIMB 8594 / NRRL 2338), this protein is Indole-3-glycerol phosphate synthase.